We begin with the raw amino-acid sequence, 591 residues long: MMRSHYCGQLNESLEGQEITLCGWVHRRRDHGGVIFLDIRDREGMAQVVFDPDRADSFAAADRVRSEYVVKVVGKVRARPAGAVNANMASGAIEVLGYELEVLNESETPPFPLNEYSDVGEETRLRYRFIDLRRPEMAEKLRLRSRITTSIRRYLDDSGFLDVETPILTRATPEGARDYLVPSRTHPGSFFALPQSPQLFKQLLMVAGFDRYYQIAKCFRDEDLRADRQPEFTQIDIETSFLNEEDIIGLTEKMVRQLFKEVLDLEFGDFPHMTFEEAMRRYGSDKPDLRNPLELVDVADQLTGVEFKVFSGPANDPKGRVAALRVPGAASMARSQIDDYTKFVSIYGAKGLAYIKVNERAKGPEGLQSPIVKFIPEDNLNVILDRVGAVDGDIVFFGADKFKIVSEALGALRIKIGNDLKLHTCEWAPMWVVDFPMFEENDDGSFTALHHPFTAPKCTPEELEANPATALSRAYDMVLNGTELGGGSIRIHRKEMQQAVFRLLGIAEDEQQEKFGFLLDALKYGAPPHGGLAFGLDRLVMLMAGAQSIREVIAFPKTQSAADVMTQAPGVVDAKALRELHIRLREQPKAE.

L-aspartate is bound at residue Glu-174. An aspartate region spans residues 198-201; that stretch reads QLFK. Arg-220 provides a ligand contact to L-aspartate. Residues 220-222 and Gln-229 contribute to the ATP site; that span reads RDE. Position 450 (His-450) interacts with L-aspartate. Position 483 (Glu-483) interacts with ATP. Arg-490 is an L-aspartate binding site. ATP is bound at residue 535–538; it reads GLDR.

This sequence belongs to the class-II aminoacyl-tRNA synthetase family. Type 1 subfamily. In terms of assembly, homodimer.

The protein resides in the cytoplasm. It catalyses the reaction tRNA(Asx) + L-aspartate + ATP = L-aspartyl-tRNA(Asx) + AMP + diphosphate. Its function is as follows. Aspartyl-tRNA synthetase with relaxed tRNA specificity since it is able to aspartylate not only its cognate tRNA(Asp) but also tRNA(Asn). Reaction proceeds in two steps: L-aspartate is first activated by ATP to form Asp-AMP and then transferred to the acceptor end of tRNA(Asp/Asn). This Pseudomonas savastanoi pv. phaseolicola (strain 1448A / Race 6) (Pseudomonas syringae pv. phaseolicola (strain 1448A / Race 6)) protein is Aspartate--tRNA(Asp/Asn) ligase.